Here is a 237-residue protein sequence, read N- to C-terminus: Probable Bax inhibitor 1 (237 aa).

Residues 1–29 (MNVFDRNINFDSLFKFSQISHSTQVHLKN) lie on the Cytoplasmic side of the membrane. Residues 30-50 (VYSSLAVCMFVAAAGSYVHVV) traverse the membrane as a helical segment. The Lumenal segment spans residues 51–52 (TR). A helical membrane pass occupies residues 53–73 (LFQGGMLSVLGSLGMMFWLAM). Topologically, residues 74–86 (TPHNSETEKKRLA) are cytoplasmic. The chain crosses the membrane as a helical span at residues 87–107 (ILAGFAFLTGVGLCPTLDFVI). The Lumenal portion of the chain corresponds to 108-112 (AINPS). A helical membrane pass occupies residues 113–133 (IIVTAFLGTSVIFVCFTLSAL). Residues 134–139 (YAKRRS) are Cytoplasmic-facing. A helical transmembrane segment spans residues 140–160 (YLFLGGTLMSGLSILFLMSMM). Over 161 to 166 (NMFFGS) the chain is Lumenal. Residues 167 to 187 (VMLFKAHMYLGLLIMCGFVLX) form a helical membrane-spanning segment. The Cytoplasmic segment spans residues 188–206 (DTQLIIEKAENGDKDYVWH). An intramembrane region (helical) is located at residues 207–227 (SVDLFLDFITIFRKLMVILAL). The Cytoplasmic portion of the chain corresponds to 228-237 (NDKDKKKEKK).

It belongs to the BI1 family. As to expression, highly abundant in testis.

The protein resides in the endoplasmic reticulum membrane. In terms of biological role, suppressor of apoptosis. Modulates unfolded protein response signaling. Modulate ER calcium homeostasis by acting as a calcium-leak channel. The sequence is that of Probable Bax inhibitor 1 (tmbim6) from Paralichthys olivaceus (Bastard halibut).